The sequence spans 483 residues: UDP-glucosyl transferase 73B2 (483 aa).

His-22 functions as the Proton acceptor in the catalytic mechanism. An anthocyanidin is bound at residue His-22. The Charge relay role is filled by Asp-133. UDP-alpha-D-glucose is bound by residues Ala-355, Gln-357, His-372, Trp-375, Asn-376, Ser-377, and Glu-380. Ala-395 contributes to the an anthocyanidin binding site. Positions 396 and 397 each coordinate UDP-alpha-D-glucose.

It belongs to the UDP-glycosyltransferase family. Expressed in roots and flowers.

The enzyme catalyses a 7-O-hydroxy-flavonol + UDP-alpha-D-glucose = a flavonol 7-O-beta-D-glucoside + UDP + H(+). The protein operates within secondary metabolite biosynthesis; flavonoid biosynthesis. Its function is as follows. Catalyzes the glycosylation of flavonoids from UDP-glucose. Uses a wide range of flavonoid substrates including flavonols (quercetin, kaempferol, isorhamnetin, 3-OH 7,2',4'-MeO-flavone), flavones (luteolin, apigenin), flavanones (naringenin, hesperetin), flavanonols (taxifolin), isoflavones (genistein, daidzein), flavonol glycosides (quercitrin, isoquercitrin, rutin), and chalcones (isoliquiritigenin). Specific for the C-7 position, with a 20-fold lower activity for the C-3 position. The chain is UDP-glucosyl transferase 73B2 (UGT73B2) from Arabidopsis thaliana (Mouse-ear cress).